We begin with the raw amino-acid sequence, 66 residues long: uncharacterized protein (66 aa).

To M.jannaschii MJ0582.

This is an uncharacterized protein from Methanocaldococcus jannaschii (strain ATCC 43067 / DSM 2661 / JAL-1 / JCM 10045 / NBRC 100440) (Methanococcus jannaschii).